The primary structure comprises 116 residues: Large ribosomal subunit protein bL17 (116 aa).

Belongs to the bacterial ribosomal protein bL17 family. As to quaternary structure, part of the 50S ribosomal subunit. Contacts protein L32.

This Microcystis aeruginosa (strain NIES-843 / IAM M-2473) protein is Large ribosomal subunit protein bL17.